Here is a 117-residue protein sequence, read N- to C-terminus: Transcription elongation factor SPT4-B (117 aa).

The interaction with SUPT5H stretch occupies residues 1 to 40; it reads MALETVPKDLRHLRACLLCSLVKTIDQFEYDGCDNCDAYL. The C4-type zinc-finger motif lies at 16–36; the sequence is CLLCSLVKTIDQFEYDGCDNC.

The protein belongs to the SPT4 family. As to quaternary structure, interacts with SUPT5H to form DSIF. DSIF interacts with the positive transcription elongation factor b complex (P-TEFb complex), which is composed of CDK9 and cyclin-T (CCNT1 or CCNT2). DSIF interacts with RNA polymerase II, and this interaction is reduced by phosphorylation of the C-terminal domain (CTD) of POLR2A by P-TEFb. DSIF also interacts with the NELF complex, which is composed of WHSC2/NELFA, COBRA1/NELFB, TH1L/NELFD and RDBP/NELFE, and this interaction occurs following prior binding of DSIF to RNA polymerase II. DSIF also interacts with HRMT1L2/PRMT1, HTATSF1/TATSF1, RNGTT/CAP1A, SKB1/PRMT5, SUPT6H, and can interact with PIN1. In terms of processing, ubiquitinated by Ubr5 when not assembled in the DSIF complex, leading to its degradation: Ubr5 recognizes and binds a degron that is not accessible when Supt4h1b is part of the DSIF complex. Expressed in brain, heart and liver.

It is found in the nucleus. Component of the DRB sensitivity-inducing factor complex (DSIF complex), which regulates mRNA processing and transcription elongation by RNA polymerase II. DSIF positively regulates mRNA capping by stimulating the mRNA guanylyltransferase activity of RNGTT/CAP1A. DSIF also acts cooperatively with the negative elongation factor complex (NELF complex) to enhance transcriptional pausing at sites proximal to the promoter. Transcriptional pausing may facilitate the assembly of an elongation competent RNA polymerase II complex. DSIF and NELF promote pausing by inhibition of the transcription elongation factor TFIIS/S-II. TFIIS/S-II binds to RNA polymerase II at transcription pause sites and stimulates the weak intrinsic nuclease activity of the enzyme. Cleavage of blocked transcripts by RNA polymerase II promotes the resumption of transcription from the new 3' terminus and may allow repeated attempts at transcription through natural pause sites. In Mus musculus (Mouse), this protein is Transcription elongation factor SPT4-B (Supt4h1b).